The sequence spans 662 residues: UvrABC system protein B (662 aa).

The region spanning 31 to 188 (DNIEGGEKAQ…NDLVDIQFER (158 aa)) is the Helicase ATP-binding domain. ATP is bound at residue 44–51 (GATGTGKT). A Beta-hairpin motif is present at residues 97 to 120 (YYDYYQPEAYVPSSDTYIEKDSSV). Residues 435–601 (QIDDLLGEIN…TIKKEIRDLI (167 aa)) form the Helicase C-terminal domain. The region spanning 626–661 (KELVKKLEKQMQEAVEVLDFELAAQIRDMMLEVKAL) is the UVR domain.

It belongs to the UvrB family. In terms of assembly, forms a heterotetramer with UvrA during the search for lesions. Interacts with UvrC in an incision complex.

It is found in the cytoplasm. In terms of biological role, the UvrABC repair system catalyzes the recognition and processing of DNA lesions. A damage recognition complex composed of 2 UvrA and 2 UvrB subunits scans DNA for abnormalities. Upon binding of the UvrA(2)B(2) complex to a putative damaged site, the DNA wraps around one UvrB monomer. DNA wrap is dependent on ATP binding by UvrB and probably causes local melting of the DNA helix, facilitating insertion of UvrB beta-hairpin between the DNA strands. Then UvrB probes one DNA strand for the presence of a lesion. If a lesion is found the UvrA subunits dissociate and the UvrB-DNA preincision complex is formed. This complex is subsequently bound by UvrC and the second UvrB is released. If no lesion is found, the DNA wraps around the other UvrB subunit that will check the other stand for damage. In Streptococcus pneumoniae serotype 2 (strain D39 / NCTC 7466), this protein is UvrABC system protein B.